The sequence spans 137 residues: Putative pre-16S rRNA nuclease (137 aa).

It belongs to the YqgF nuclease family.

The protein resides in the cytoplasm. In terms of biological role, could be a nuclease involved in processing of the 5'-end of pre-16S rRNA. The polypeptide is Putative pre-16S rRNA nuclease (Clostridium botulinum (strain Alaska E43 / Type E3)).